A 437-amino-acid polypeptide reads, in one-letter code: tRNA-2-methylthio-N(6)-dimethylallyladenosine synthase (437 aa).

Positions 1 to 115 (MKVYIETMGC…ISQVIHKEKA (115 aa)) constitute an MTTase N-terminal domain. Positions 10, 46, 78, 148, 152, and 155 each coordinate [4Fe-4S] cluster. In terms of domain architecture, Radical SAM core spans 134–367 (KKAQIRSLLN…QNRHKEILEE (234 aa)). Residues 370 to 436 (KLEVGKTHVV…KGRLIAAIKG (67 aa)) form the TRAM domain.

This sequence belongs to the methylthiotransferase family. MiaB subfamily. In terms of assembly, monomer. [4Fe-4S] cluster serves as cofactor.

The protein resides in the cytoplasm. It carries out the reaction N(6)-dimethylallyladenosine(37) in tRNA + (sulfur carrier)-SH + AH2 + 2 S-adenosyl-L-methionine = 2-methylsulfanyl-N(6)-dimethylallyladenosine(37) in tRNA + (sulfur carrier)-H + 5'-deoxyadenosine + L-methionine + A + S-adenosyl-L-homocysteine + 2 H(+). Catalyzes the methylthiolation of N6-(dimethylallyl)adenosine (i(6)A), leading to the formation of 2-methylthio-N6-(dimethylallyl)adenosine (ms(2)i(6)A) at position 37 in tRNAs that read codons beginning with uridine. In Helicobacter pylori (strain HPAG1), this protein is tRNA-2-methylthio-N(6)-dimethylallyladenosine synthase.